We begin with the raw amino-acid sequence, 234 residues long: Peroxisomal coenzyme A diphosphatase ndx-8 (234 aa).

One can recognise a Nudix hydrolase domain in the interval 27-162; it reads EQDAGVLILL…TFLIDEFYMV (136 aa). Residues 66 to 90 carry the Nudix box motif; sequence GGMMDDEDGQNVRRTAIREAYEEVG. Positions 84 and 88 each coordinate Mg(2+). The chain crosses the membrane as a helical span at residues 170 to 190; that stretch reads YPTTYGVTALMCIVVAIGLLG. The Microbody targeting signal motif lies at 232–234; the sequence is SKI.

The protein belongs to the Nudix hydrolase family. It depends on Mg(2+) as a cofactor. Requires Mn(2+) as cofactor.

It is found in the peroxisome membrane. Its function is as follows. Coenzyme A diphosphatase which mediates the cleavage of CoA into 3',5'-ADP and 4'-phosphopantetheine. The polypeptide is Peroxisomal coenzyme A diphosphatase ndx-8 (ndx-8) (Caenorhabditis elegans).